A 571-amino-acid chain; its full sequence is Urease subunit alpha (571 aa).

The Ni(2+) site is built by H138, H140, and K221. K221 is modified (N6-carboxylysine). A substrate-binding site is contributed by H223. 2 residues coordinate Ni(2+): H250 and H276. Catalysis depends on H324, which acts as the Proton donor. D364 contributes to the Ni(2+) binding site.

The protein belongs to the metallo-dependent hydrolases superfamily. Urease alpha subunit family. In terms of assembly, heterotrimer of UreA (gamma), UreB (beta) and UreC (alpha) subunits. Three heterotrimers associate to form the active enzyme. Ni cation serves as cofactor. Post-translationally, carboxylation allows a single lysine to coordinate two nickel ions.

It is found in the cytoplasm. It catalyses the reaction urea + 2 H2O + H(+) = hydrogencarbonate + 2 NH4(+). The protein operates within nitrogen metabolism; urea degradation; CO(2) and NH(3) from urea (urease route): step 1/1. The chain is Urease subunit alpha from Staphylococcus aureus (strain JH9).